Here is a 162-residue protein sequence, read N- to C-terminus: Selenoprotein F (162 aa).

Residues 1-28 (MAARRDGWLGPAFGLRLLLATVLQTVSA) form the signal peptide. A non-standard amino acid (selenocysteine) is located at residue selenocysteine 93.

The protein belongs to the selenoprotein M/F family. As to quaternary structure, forms a tight complex with UGGT1/UGCGL1. Interacts with UGGT2/UGCGL2. Interacts with RDH11.

The protein resides in the endoplasmic reticulum lumen. Its function is as follows. May be involved in redox reactions associated with the formation of disulfide bonds. May contribute to the quality control of protein folding in the endoplasmic reticulum. May regulate protein folding by enhancing the catalytic activity of UGGT1/UGCGL1 and UGGT2/UGCGL2. In Bos taurus (Bovine), this protein is Selenoprotein F.